The chain runs to 583 residues: Phosphoglucomutase, cytoplasmic 1 (583 aa).

Alpha-D-glucose 1,6-bisphosphate-binding residues include arginine 25 and serine 124. The Phosphoserine intermediate role is filled by serine 124. Positions 124, 300, 302, and 304 each coordinate Mg(2+). Serine 124 is subject to Phosphoserine. Alpha-D-glucose 1,6-bisphosphate is bound by residues aspartate 304, arginine 305, threonine 368, glutamate 387, serine 389, and lysine 400.

It belongs to the phosphohexose mutase family. Monomer. It depends on Mg(2+) as a cofactor. Post-translationally, autophosphorylated. Mostly expressed in roots and coleoptiles, and, to a lower extent, in leaves, pollen and developing seeds.

The protein localises to the cytoplasm. The catalysed reaction is alpha-D-glucose 1-phosphate = alpha-D-glucose 6-phosphate. It catalyses the reaction O-phospho-L-seryl-[protein] + alpha-D-glucose 1-phosphate = alpha-D-glucose 1,6-bisphosphate + L-seryl-[protein]. It carries out the reaction alpha-D-glucose 1,6-bisphosphate + L-seryl-[protein] = O-phospho-L-seryl-[protein] + alpha-D-glucose 6-phosphate. In terms of biological role, catalyzes the reversible isomerization of alpha-D-glucose 1-phosphate to alpha-D-glucose 6-phosphate. The mechanism proceeds via the intermediate compound alpha-D-glucose 1,6-bisphosphate. This enzyme participates in both the breakdown and synthesis of glucose. This chain is Phosphoglucomutase, cytoplasmic 1, found in Zea mays (Maize).